Here is a 372-residue protein sequence, read N- to C-terminus: MRDKVTGARRWVVKIGSALLTADGRGLDRAAMAVWVKQMVALREQGVELVLVSSGAVAAGMSRLGWTSRPSAMHELQAAAAIGQMALVQAWESSFAEHGRRTAQILLTHDDLSDRKRYLNARSTLRTLVGLDVIPVINENDTVVTDEIRFGDNDTLAALVANLVEADLLVILTDRDGMYTADPRHNPDAELIHEARADDPALDAVAGGVGGALGRGGMQTKLRASRLAARSGAHTVIVGGAIEQVLARLKAGERLGTLLAPERGLLAARKQWLAGHLQTRGTLVLDAGAVKALSQDRKSLLPVGVKAVQGSFRRGEMVVCVAPDGREVARGLVNYSALEAQKIIGQPSDAIEKLLGYVDEPELVHRDNLILV.

Lys-14 is a binding site for ATP. Substrate-binding residues include Ser-54, Asp-141, and Asn-153. Residue 173 to 174 (TD) participates in ATP binding. The region spanning 280 to 358 (RGTLVLDAGA…DAIEKLLGYV (79 aa)) is the PUA domain.

This sequence belongs to the glutamate 5-kinase family.

It is found in the cytoplasm. It carries out the reaction L-glutamate + ATP = L-glutamyl 5-phosphate + ADP. Its pathway is amino-acid biosynthesis; L-proline biosynthesis; L-glutamate 5-semialdehyde from L-glutamate: step 1/2. In terms of biological role, catalyzes the transfer of a phosphate group to glutamate to form L-glutamate 5-phosphate. This chain is Glutamate 5-kinase, found in Ectopseudomonas mendocina (strain ymp) (Pseudomonas mendocina).